The primary structure comprises 343 residues: Transmembrane protein 120A (343 aa).

Topologically, residues 1–132 are cytoplasmic; that stretch reads MHPPPPGPLG…KQAKFAYKDE (132 aa). Lysine 130 contacts CoA. A helical transmembrane segment spans residues 133 to 152; it reads YEKFKLYLTIILILISFTCR. Over 153–158 the chain is Extracellular; that stretch reads FLLNSR. Residues 159–177 form a helical membrane-spanning segment; sequence VTDAAFNFLLVWYYCTLTI. Over 178–190 the chain is Cytoplasmic; that stretch reads RESILINNGSRIK. 2 residues coordinate CoA: serine 187 and arginine 188. Residues 191–209 traverse the membrane as a helical segment; it reads GWWVFHHYVSTFLSGVMLT. Residues 210–218 lie on the Extracellular side of the membrane; sequence WPDGLMYQK. The chain crosses the membrane as a helical span at residues 219-240; sequence FRNQFLSFSMYQSFVQFLQYYY. CoA contacts are provided by glutamine 237, tyrosine 240, glutamine 241, and histidine 283. At 241–270 the chain is on the cytoplasmic side; that stretch reads QSGCLYRLRALGERHTMDLTVEGFQSWMWR. A helical membrane pass occupies residues 271–294; sequence GLTFLLPFLFFGHFWQLFNALTLF. Topologically, residues 295 to 304 are extracellular; the sequence is NLARDPECKE. Residues 305–330 form a helical membrane-spanning segment; the sequence is WQVLMCGFPFLLLFLGNFFTTLRVVH. The Cytoplasmic segment spans residues 331-343; that stretch reads QKFHNQLHGSKKE. CoA is bound at residue lysine 332.

This sequence belongs to the TMEM120 family. In terms of assembly, homodimer. Forms heterooligomer with TMEM120B. Interacts with PKD2; TMEM120A inhibits PKD2 channel activity through the physical association of PKD2 with TMEM120A.

The protein localises to the cell membrane. It localises to the nucleus inner membrane. Its subcellular location is the endoplasmic reticulum. In terms of biological role, multifunctional protein involved in mechanosensation, and plays an essential role in lipid metabolism and adipocyte differentiation. May function as an ion channel involved in sensing mechanical stimuli. Mediates the mechanosensitivity of the PKD2-TMEM120A channel complex through direct physical interaction. TMEM120A seems to affect mechanosensation by inhibiting PIEZO2 channels, possibly by altering cellular lipid content. TMEM120A is structurally similar to a lipid-modifying enzyme, ELOVL7, and contains a bound coenzyme A molecule, which suggests it might function as an enzyme in lipid metabolism. Additionnaly, implicated in innate immune response against Zika virus. Acts as a key activator of the antiviral signaling involving STING1. This is Transmembrane protein 120A from Bos taurus (Bovine).